A 75-amino-acid polypeptide reads, in one-letter code: Small ribosomal subunit protein bS18c (75 aa).

Belongs to the bacterial ribosomal protein bS18 family. Part of the 30S ribosomal subunit.

The protein localises to the plastid. Its subcellular location is the chloroplast. The sequence is that of Small ribosomal subunit protein bS18c from Psilotum nudum (Whisk fern).